Here is an 81-residue protein sequence, read N- to C-terminus: uncharacterized protein (81 aa).

This is an uncharacterized protein from Dictyostelium discoideum (Social amoeba).